Consider the following 325-residue polypeptide: WUSCHEL-related homeobox 8 (325 aa).

The homeobox; WUS-type DNA-binding region spans 51–115 (DPKPRWNPKP…NRKSRAKHKL (65 aa)).

Belongs to the WUS homeobox family. In terms of tissue distribution, expressed only in the egg cell. Not detected in the pollen tube. Expressed in the zygote, the basal cell, and later the suspensor. Expressed in all suspensor cells, except the hypophysis, and in the embryo surrounding region (ESR) endosperm cells. Strongly expressed in the suspensor cells, with a weak expression also detected throughout the developing embryo.

The protein resides in the nucleus. Functionally, probable transcription factor, which may be involved in embryonic patterning. May be required for basal embryo development after fertilization. Acts partially redundantly with STIP in promoting embryonic cell division and proliferation. Promotes cotyledon boundary formation by maintaining the symmetry in CUC genes expression domains. The chain is WUSCHEL-related homeobox 8 from Arabidopsis thaliana (Mouse-ear cress).